We begin with the raw amino-acid sequence, 306 residues long: ATP phosphoribosyltransferase (306 aa).

This sequence belongs to the ATP phosphoribosyltransferase family.

Its subcellular location is the cytoplasm. The catalysed reaction is 1-(5-phospho-beta-D-ribosyl)-ATP + diphosphate = 5-phospho-alpha-D-ribose 1-diphosphate + ATP. It participates in amino-acid biosynthesis; L-histidine biosynthesis; L-histidine from 5-phospho-alpha-D-ribose 1-diphosphate: step 1/9. Catalyzes the condensation of ATP and 5-phosphoribose 1-diphosphate to form N'-(5'-phosphoribosyl)-ATP (PR-ATP). Has a crucial role in the pathway because the rate of histidine biosynthesis seems to be controlled primarily by regulation of the enzymatic activity. The sequence is that of ATP phosphoribosyltransferase (HIS1) from Candida glabrata (strain ATCC 2001 / BCRC 20586 / JCM 3761 / NBRC 0622 / NRRL Y-65 / CBS 138) (Yeast).